We begin with the raw amino-acid sequence, 199 residues long: Pyridoxal 5'-phosphate synthase subunit PdxT (199 aa).

49–51 provides a ligand contact to L-glutamine; the sequence is GES. Cys81 serves as the catalytic Nucleophile. L-glutamine-binding positions include Arg110 and 139-140; that span reads IR. Active-site charge relay system residues include His175 and Glu177.

Belongs to the glutaminase PdxT/SNO family. In the presence of PdxS, forms a dodecamer of heterodimers. Only shows activity in the heterodimer.

It carries out the reaction aldehydo-D-ribose 5-phosphate + D-glyceraldehyde 3-phosphate + L-glutamine = pyridoxal 5'-phosphate + L-glutamate + phosphate + 3 H2O + H(+). The catalysed reaction is L-glutamine + H2O = L-glutamate + NH4(+). It functions in the pathway cofactor biosynthesis; pyridoxal 5'-phosphate biosynthesis. Functionally, catalyzes the hydrolysis of glutamine to glutamate and ammonia as part of the biosynthesis of pyridoxal 5'-phosphate. The resulting ammonia molecule is channeled to the active site of PdxS. The chain is Pyridoxal 5'-phosphate synthase subunit PdxT from Frankia casuarinae (strain DSM 45818 / CECT 9043 / HFP020203 / CcI3).